Here is a 597-residue protein sequence, read N- to C-terminus: NADPH-dependent diflavin oxidoreductase 1 (597 aa).

A Flavodoxin-like domain is found at 6–150 (LLVLFGSQTG…AIDPWLQDLW (145 aa)). Residues 12–17 (SQTGTA), 59–62 (ATTG), 97–106 (LGDSSYAKFN), and Asp132 each bind FMN. Positions 206 to 446 (LQPFLAPMVS…WVRSGGLTFP (241 aa)) constitute an FAD-binding FR-type domain. FAD is bound by residues Arg350, 382 to 385 (RAFS), and 416 to 419 (GLCS). Residues Thr460, 515 to 516 (SR), 521 to 525 (KVYVQ), and Asp558 contribute to the NADP(+) site. Residue Trp596 coordinates FAD.

This sequence belongs to the NADPH-dependent diflavin oxidoreductase NDOR1 family. The protein in the N-terminal section; belongs to the flavodoxin family. In the C-terminal section; belongs to the flavoprotein pyridine nucleotide cytochrome reductase family. In terms of assembly, interacts with CIAPIN1; as part of the cytosolic iron-sulfur (Fe-S) protein assembly (CIA) machinery. Interacts with DCPS. FAD is required as a cofactor. FMN serves as cofactor.

It localises to the cytoplasm. Its subcellular location is the perinuclear region. The enzyme catalyses 2 oxidized [2Fe-2S]-[protein] + NADPH = 2 reduced [2Fe-2S]-[protein] + NADP(+) + H(+). Its function is as follows. NADPH-dependent reductase which is a central component of the cytosolic iron-sulfur (Fe-S) protein assembly (CIA) machinery. Transfers electrons from NADPH via its FAD and FMN prosthetic groups to the [2Fe-2S] cluster of CIAPIN1, another key component of the CIA machinery. In turn, this reduced cluster provides electrons for assembly of cytosolic iron-sulfur cluster proteins. It can also reduce the [2Fe-2S] cluster of CISD1 and activate this protein implicated in Fe/S cluster repair. In vitro can fully activate methionine synthase/MTR in the presence of soluble cytochrome b5/CYB5A. In Bos taurus (Bovine), this protein is NADPH-dependent diflavin oxidoreductase 1.